Consider the following 400-residue polypeptide: Na(+)/H(+) antiporter NhaA (400 aa).

The next 11 membrane-spanning stretches (helical) occupy residues 10–30 (FNLE…AMII), 60–80 (AHHW…GLEL), 95–115 (IILP…VYLF), 126–146 (GWAI…SLLG), 155–175 (VFLV…IALF), 178–198 (NDLS…LYLL), 218–238 (VAVL…ALFI), 265–285 (GILP…AGFG), 295–315 (IAAG…WLIF), 334–354 (AALL…LAFA), and 364–384 (LGII…LKAT).

This sequence belongs to the NhaA Na(+)/H(+) (TC 2.A.33) antiporter family.

Its subcellular location is the cell inner membrane. The enzyme catalyses Na(+)(in) + 2 H(+)(out) = Na(+)(out) + 2 H(+)(in). Functionally, na(+)/H(+) antiporter that extrudes sodium in exchange for external protons. The chain is Na(+)/H(+) antiporter NhaA from Psychrobacter cryohalolentis (strain ATCC BAA-1226 / DSM 17306 / VKM B-2378 / K5).